The following is a 232-amino-acid chain: Putative N-acetylmannosamine-6-phosphate 2-epimerase (232 aa).

It belongs to the NanE family.

The catalysed reaction is an N-acyl-D-glucosamine 6-phosphate = an N-acyl-D-mannosamine 6-phosphate. It participates in amino-sugar metabolism; N-acetylneuraminate degradation; D-fructose 6-phosphate from N-acetylneuraminate: step 3/5. Converts N-acetylmannosamine-6-phosphate (ManNAc-6-P) to N-acetylglucosamine-6-phosphate (GlcNAc-6-P). The sequence is that of Putative N-acetylmannosamine-6-phosphate 2-epimerase from Proteus mirabilis (strain HI4320).